We begin with the raw amino-acid sequence, 572 residues long: Sulfite reductase [NADPH] hemoprotein beta-component (572 aa).

The [4Fe-4S] cluster site is built by C437, C443, C482, and C486. C486 lines the siroheme pocket.

It belongs to the nitrite and sulfite reductase 4Fe-4S domain family. In terms of assembly, alpha(8)-beta(8). The alpha component is a flavoprotein, the beta component is a hemoprotein. Siroheme is required as a cofactor. It depends on [4Fe-4S] cluster as a cofactor.

It catalyses the reaction hydrogen sulfide + 3 NADP(+) + 3 H2O = sulfite + 3 NADPH + 4 H(+). It functions in the pathway sulfur metabolism; hydrogen sulfide biosynthesis; hydrogen sulfide from sulfite (NADPH route): step 1/1. Component of the sulfite reductase complex that catalyzes the 6-electron reduction of sulfite to sulfide. This is one of several activities required for the biosynthesis of L-cysteine from sulfate. The chain is Sulfite reductase [NADPH] hemoprotein beta-component from Lysinibacillus sphaericus (strain C3-41).